Consider the following 71-residue polypeptide: Small ribosomal subunit protein bS21 (71 aa).

The tract at residues lysine 40 to tyrosine 71 is disordered. A compositionally biased stretch (basic residues) spans arginine 45–tyrosine 71.

Belongs to the bacterial ribosomal protein bS21 family.

The polypeptide is Small ribosomal subunit protein bS21 (Xylella fastidiosa (strain M23)).